We begin with the raw amino-acid sequence, 284 residues long: Lipase chaperone (284 aa).

A helical transmembrane segment spans residues Ile-4 to Ser-24.

This sequence belongs to the lipase chaperone family.

Its subcellular location is the cell inner membrane. Its function is as follows. May be involved in the folding of the extracellular lipase during its passage through the periplasm. The sequence is that of Lipase chaperone (lifO) from Vibrio cholerae serotype O1 (strain ATCC 39315 / El Tor Inaba N16961).